We begin with the raw amino-acid sequence, 320 residues long: uncharacterized protein (320 aa).

Helical transmembrane passes span 24–44 (FEFS…IFFI), 65–85 (FVLS…LWSL), 105–125 (TTSC…FIVV), 132–152 (SWFV…IAIL), 179–199 (ISLT…IYTF), 226–246 (MIPI…YFGY), and 253–275 (TSRW…MLSL).

It is found in the membrane. This is an uncharacterized protein from Caenorhabditis elegans.